A 571-amino-acid chain; its full sequence is Arginine--tRNA ligase (571 aa).

The 'HIGH' region signature appears at 122-132 (PNIAKEMHVGH).

This sequence belongs to the class-I aminoacyl-tRNA synthetase family. As to quaternary structure, monomer.

The protein localises to the cytoplasm. It carries out the reaction tRNA(Arg) + L-arginine + ATP = L-arginyl-tRNA(Arg) + AMP + diphosphate. This is Arginine--tRNA ligase from Buchnera aphidicola subsp. Cinara cedri (strain Cc).